The sequence spans 66 residues: Hirudin-PA (66 aa).

The interval 1–3 is interaction with thrombin active site; that stretch reads ITY. Intrachain disulfides connect cysteine 6–cysteine 14, cysteine 16–cysteine 28, and cysteine 22–cysteine 39. Residues 39 to 66 are disordered; it reads CVTGEGTPKPQSHNQGDFEPIPEDAYDE. Threonine 45 is a glycosylation site (O-linked (GalNAc...) threonine). The tract at residues 55 to 66 is interaction with fibrinogen-binding exosite of thrombin; that stretch reads DFEPIPEDAYDE. The residue at position 64 (tyrosine 64) is a Sulfotyrosine.

It belongs to the protease inhibitor I14 (hirudin) family.

It localises to the secreted. Functionally, hirudin is a potent thrombin-specific protease inhibitor. It forms a stable non-covalent complex with alpha-thrombin, thereby abolishing its ability to cleave fibrinogen. The chain is Hirudin-PA from Hirudo medicinalis (Medicinal leech).